A 3298-amino-acid chain; its full sequence is MQKELGIVPSCPGMKSPRPHLLLPLLLLLLLLLGAGVPGAWGQAGSLDLQIDEEQPAGTLIGDISAGLPAGTAAPLMYFISAQEGSGVGTDLAIDEHSGVVRTARVLDREQRDRYRFTAVTPDGATVEVTVRVADINDHAPAFPQARAALQVPEHTAFGTRYPLEPARDADAGRLGTQGYALSGDGAGETFRLETRPGPDGTPVPELVVTGELDRENRSHYMLQLEAYDGGSPPRRAQALLDVTLLDINDHAPAFNQSRYHAVVSESLAPGSPVLQVFASDADAGVNGAVTYEINRRQSEGDGPFSIDAHTGLLQLERPLDFEQRRVHELVVQARDGGAHPELGSAFVTVHVRDANDNQPSMTVIFLSADGSPQVSEAAPPGQLVARISVSDPDDGDFAHVNVSLEGGEGHFALSTQDSVIYLVCVARRLDREERDAYNLRVTATDSGSPPLRAEAAFVLHVTDVNDNAPAFDRQLYRPEPLPEVALPGSFVVRVTARDPDQGTNGQVTYSLAPGAHTHWFSIDPTSGIITTAASLDYELEPQPQLIVVATDGGLPPLASSATVSVALQDVNDNEPQFQRTFYNASLPEGTQPGTCFLQVTATDADSGPFGLLSYSLGAGLGSSGSPPFRIDAHSGDVCTTRTLDRDQGPSSFDFTVTAVDGGGLKSMVYVKVFLSDENDNPPQFYPREYAASISAQSPPGTAVLRLRAHDPDQGSHGRLSYHILAGNSPPLFTLDEQSGLLTVAWPLARRANSVVQLEIGAEDGGGLQAEPSARVDISIVPGTPTPPIFEQLQYVFSVPEDVAPGTSVGIVQAHNPPGRLAPVTLSLSGGDPRGLFSLDAVSGLLQTLRPLDRELLGPVLELEVRAGSGVPPAFAVARVRVLLDDVNDNSPAFPAPEDTVLLPPNTAPGTPIYTLRALDPDSGVNSRVTFTLLAGGGGAFTVDPTTGHVRLMRPLGPSGGPAHELELEARDGGSPPRTSHFRLRVVVQDVGTRGLAPRFNSPTYRVDLPSGTTAGTQVLQVQAQAPDGGPITYHLAAEGASSPFGLEPQSGWLWVRAALDREAQELYILKVMAVSGSKAELGQQTGTATVRVSILNQNEHSPRLSEDPTFLAVAENQPPGTSVGRVFATDRDSGPNGRLTYSLQQLSEDSKAFRIHPQTGEVTTLQTLDREQQSSYQLLVQVQDGGSPPRSTTGTVHVAVLDLNDNSPTFLQASGAAGGGLPIQVPDRVPPGTLVTTLQAKDPDEGENGTILYTLTGPGSELFSLHPHSGELLTAAPLIRAERPHYVLTLSAHDQGSPPRSASLQLLVQVLPSARLAEPPPDLAERDPAAPVPVVLTVTAAEGLRPGSLLGSVAAPEPAGVGALTYTLVGGADPEGTFALDAASGRLYLARPLDFEAGPPWRALTVRAEGPGGAGARLLRVQVQVQDENEHAPAFARDPLALALPENPEPGAALYTFRASDADGPGPNSDVRYRLLRQEPPVPALRLDARTGALSAPRGLDRETTPALLLLVEATDRPANASRRRAARVSARVFVTDENDNAPVFASPSRVRLPEDQPPGPAALHVVARDPDLGEAARVSYRLASGGDGHFRLHSSTGALSVVRPLDREQRAEHVLTVVASDHGSPPRSATQVLTVSVADVNDEAPTFQQQEYSVLLRENNPPGTSLLTLRATDPDVGANGQVTYGGVSSESFSLDPDTGVLTTLRALDREEQEEINLTVYAQDRGSPPQLTHVTVRVAVEDENDHAPTFGSAHLSLEVPEGQDPQTLTMLRASDPDVGANGQLQYRILDGDPSGAFVLDLASGEFGTMRPLDREVEPAFQLRIEARDGGQPALSATLLLTVTVLDANDHAPAFPVPAYSVEVPEDVPAGTLLLQLQAHDPDAGANGHVTYYLGAGTAGAFLLEPSSGELRTAAALDREQCPSYTFSVSAVDGAAAGPLSTTVSVTITVRDVNDHAPTFPTSPLRLRLPRPGPSFSTPTLALATLRAEDRDAGANASILYRLAGTPPPGTTVDSYTGEIRVARSPVALGPRDRVLFIVATDLGRPARSATGVIIVGLQGEAERGPRFPRASSEATIRENAPPGTPIVSPRAVHAGGTNGPITYSILSGNEKGTFSIQPSTGAITVRSAEGLDFEVSPRLRLVLQAESGGAFAFTVLTLTLQDANDNAPRFLRPHYVAFLPESRPLEGPLLQVEADDLDQGSGGQISYSLAASQPARGLFHVDPTTGTITTTAILDREIWAETRLVLMATDRGSPALVGSATLTVMVIDTNDNRPTIPQPWELRVSEDALLGSEIAQVTGNDVDSGPVLWYVLSPSGPQDPFSVGRYGGRVSLTGPLDFEQCDRYQLQLLAHDGPHEGRANLTVLVEDVNDNAPAFSQSLYQVMLLEHTPPGSAILSVSATDRDSGANGHISYHLASPADGFSVDPNNGTLFTIVGTVALGHDGSGAVDVVLEARDHGAPGRAARATVHVQLQDQNDHAPSFTLSHYRVAVTEDLPPGSTLLTLEATDADGSRSHAAVDYSIISGNWGRVFQLEPRLAEAGESAGPGPRALGCLVLLEPLDFESLTQYNLTVAAADRGQPPQSSVVPVTVTVLDVNDNPPVFTRASYRVTVPEDTPVGAELLHVEASDADPGPHGLVRFTVSSGDPSGLFELDESSGTLRLAHALDCETQARHQLVVQAADPAGAHFALAPVTIEVQDVNDHGPAFPLNLLSTSVAENQPPGTLVTTLHAIDGDAGAFGRLRYSLLEAGPGPEGREAFALNSSTGELRARVPFDYEHTESFRLLVGAADAGNLSASVTVSVLVTGEDEYDPVFLAPAFHFQVPEGARRGHSLGHVQATDEDGGADGLVLYSLATSSPYFGINQTTGALYLRVDSRAPGSGTATSGGGGRTRREAPRELRLEVIARGPLPGSRSATVPVTVDITHTALGLAPDLNLLLVGAVAASLGVVVVLALAALVLGLVRARSRKAEAAPGPMSQAAPLASDSLQKLGREPPSPPPSEHLYHQTLPSYGGPGAGGPYPRGGSLDPSHSSGRGSAEAAEDDEIRMINEFPRVASVASSLAARGPDSGIQQDADGLSDTSCEPPAPDTWYKGRKAGLLLPGAGATLYREEGPPATATAFLGGCGLSPAPTGDYGFPADGKPCVAGALTAIVAGEEELRGSYNWDYLLSWCPQFQPLASVFTEIARLKDEARPCPPAPRIDPPPLITAVAHPGAKSVPPKPANTAAARAIFPPASHRSPISHEGSLSSAAMSPSFSPSLSPLAARSPVVSPFGVAQGPSASALSAESGLEPPDDTELHI.

A signal peptide spans 1 to 42; that stretch reads MQKELGIVPSCPGMKSPRPHLLLPLLLLLLLLLGAGVPGAWG. Cadherin domains follow at residues 43 to 143, 144 to 255, 256 to 362, 367 to 472, 474 to 578, 579 to 685, 686 to 790, 791 to 894, 895 to 1000, 1001 to 1111, 1112 to 1211, 1218 to 1324, 1333 to 1436, 1437 to 1546, 1547 to 1649, 1650 to 1751, 1752 to 1855, 1856 to 1960, 1965 to 2068, 2069 to 2171, 2172 to 2277, 2278 to 2376, 2377 to 2482, 2483 to 2602, 2603 to 2706, 2707 to 2813, and 2814 to 2933; these read QAGS…APAF, PQAR…APAF, NQSR…QPSM, LSAD…APAF, RQLY…EPQF, QRTF…PPQF, YPRE…PPIF, EQLQ…SPAF, PAPE…APRF, NSPT…DPTF, LAVA…SPTF, AGGG…PPDL, VPVV…APAF, ARDP…APVF, ASPS…APTF, QQQE…APTF, GSAH…APAF, PVPA…APTF, LRLR…GPRF, PRAS…APRF, LRPH…RPTI, PQPW…APAF, SQSL…APSF, TLSH…PPVF, TRAS…GPAF, PLNL…DPVF, and LAPA…APDL. Residues 43-2940 lie on the Extracellular side of the membrane; that stretch reads QAGSLDLQID…PDLNLLLVGA (2898 aa). 3 N-linked (GlcNAc...) asparagine glycosylation sites follow: Asn217, Asn256, and Asn402. A glycan (N-linked (GlcNAc...) asparagine) is linked at Asn584. Residue Asn1249 is glycosylated (N-linked (GlcNAc...) asparagine). An N-linked (GlcNAc...) asparagine glycan is attached at Asn1521. Asn1718 is a glycosylation site (N-linked (GlcNAc...) asparagine). Asn1996 is a glycosylation site (N-linked (GlcNAc...) asparagine). The interval 2065–2094 is disordered; that stretch reads GPRFPRASSEATIRENAPPGTPIVSPRAVH. N-linked (GlcNAc...) asparagine glycans are attached at residues Asn2361, Asn2428, and Asn2569. N-linked (GlcNAc...) asparagine glycosylation is found at Asn2761, Asn2792, and Asn2862. Residues 2941-2961 form a helical membrane-spanning segment; the sequence is VAASLGVVVVLALAALVLGLV. At 2962 to 3298 the chain is on the cytoplasmic side; the sequence is RARSRKAEAA…EPPDDTELHI (337 aa). The disordered stretch occupies residues 2986 to 3040; it reads LQKLGREPPSPPPSEHLYHQTLPSYGGPGAGGPYPRGGSLDPSHSSGRGSAEAAE. The segment covering 3011–3020 has biased composition (gly residues); it reads GGPGAGGPYP. Position 3055 is a phosphoserine (Ser3055). Disordered regions lie at residues 3062 to 3082 and 3233 to 3298; these read ARGP…TSCE and ASHR…ELHI. Composition is skewed to low complexity over residues 3244 to 3266 and 3276 to 3289; these read SLSS…ARSP and GPSA…SGLE.

Heterophilic interaction with FAT4; this interaction affects their respective protein levels. In terms of tissue distribution, expressed in fibroblasts but not in melanocytes or keratinocytes.

Its subcellular location is the cell membrane. Calcium-dependent cell-adhesion protein. Mediates functions in neuroprogenitor cell proliferation and differentiation. In the heart, has a critical role for proper morphogenesis of the mitral valve, acting in the regulation of cell migration involved in valve formation. The protein is Protocadherin-16 (DCHS1) of Homo sapiens (Human).